Here is a 931-residue protein sequence, read N- to C-terminus: Bifunctional uridylyltransferase/uridylyl-removing enzyme (931 aa).

The interval 1-383 is uridylyltransferase; sequence MDLATTNDAA…RPGTELRRVP (383 aa). The segment at 384–739 is uridylyl-removing; that stretch reads EGDDFIIDNN…VGFDEARGVT (356 aa). Residues 499 to 622 enclose the HD domain; the sequence is VDEHLLRCIG…VQSVEQMKLL (124 aa). ACT domains follow at residues 740-822 and 851-931; these read ELTI…VVAR and VIEV…QSVG.

The protein belongs to the GlnD family. The cofactor is Mg(2+).

The catalysed reaction is [protein-PII]-L-tyrosine + UTP = [protein-PII]-uridylyl-L-tyrosine + diphosphate. It carries out the reaction [protein-PII]-uridylyl-L-tyrosine + H2O = [protein-PII]-L-tyrosine + UMP + H(+). With respect to regulation, uridylyltransferase (UTase) activity is inhibited by glutamine, while glutamine activates uridylyl-removing (UR) activity. In terms of biological role, modifies, by uridylylation and deuridylylation, the PII regulatory proteins (GlnB and homologs), in response to the nitrogen status of the cell that GlnD senses through the glutamine level. Under low glutamine levels, catalyzes the conversion of the PII proteins and UTP to PII-UMP and PPi, while under higher glutamine levels, GlnD hydrolyzes PII-UMP to PII and UMP (deuridylylation). Thus, controls uridylylation state and activity of the PII proteins, and plays an important role in the regulation of nitrogen assimilation and metabolism. In Nitrobacter hamburgensis (strain DSM 10229 / NCIMB 13809 / X14), this protein is Bifunctional uridylyltransferase/uridylyl-removing enzyme.